The chain runs to 514 residues: MVWEVKTNQMPNAVQKLLLVMDKRASGMNDSLELLQCNENLPSSPGYNSCDEHMELDDLPELQAVQSDPTQSGMYQLSSDVSHQEYPRSSWNQNTSDIPETTYRENEVDWLTELANIATSPQSPLMQCSFYNRSSPVHIIATSKSLHSYARPPPVSSSSKSEPAFPHHHWKEETPVRHERANSESESGIFCMSSLSDDDDLGWCNSWPSTVWHCFLKGTRLCFHKGSNKEWQDVEDFARAEGCDNEEDLQMGIHKGYGSDGLKLLSHEESVSFGESVLKLTFDPGTVEDGLLTVECKLDHPFYVKNKGWSSFYPSLTVVQHGIPCCEVHIGDVRLPPGHLDAINFDDSGVFDTFKSYDFTPMDSSAVYVLSSMARQRRASLSCGGPGGQDFARSGFSKNCGSPGSSQLSSSSLYAKAVKNHSSGTVSATSPNKCKRPMNAFMLFAKKYRVEYTQMYPGKDNRAISVILGDRWKKMKNEERRMYTLEAKALAEEQKRLNPDCWKRKRTNSSSQQH.

Residues 150–182 (ARPPPVSSSSKSEPAFPHHHWKEETPVRHERAN) form a disordered region. A compositionally biased stretch (basic and acidic residues) spans 170 to 182 (WKEETPVRHERAN). Residues 203-345 (WCNSWPSTVW…PPGHLDAINF (143 aa)) form the AXH domain. A DNA-binding region (HMG box) is located at residues 434 to 502 (CKRPMNAFML…EQKRLNPDCW (69 aa)).

In terms of assembly, binds TCF4. Binds RB1. Binds the second PAH repeat of SIN3A. Ubiquitinated by the CTLH E3 ubiquitin-protein ligase complex, leading to subsequent proteasomal degradation.

The protein localises to the nucleus. In terms of biological role, transcriptional repressor that binds to the promoter region of target genes. Plays a role in the regulation of the cell cycle and of the Wnt pathway. Binds preferentially to the sequence 5'-TTCATTCATTCA-3'. Binding to the histone H1.0 promoter is enhanced by interaction with RB1. Disrupts the interaction between DNA and TCF4. The protein is HMG box-containing protein 1 (HBP1) of Pongo abelii (Sumatran orangutan).